Reading from the N-terminus, the 637-residue chain is Chaperone protein HtpG (637 aa).

Positions 1–335 (MQGTVNSERL…SSDLPLNISR (335 aa)) are a; substrate-binding. Residues 336–559 (ETLQNNKIIE…DGSMDIRMER (224 aa)) form a b region. Positions 560–637 (FLREQKQLNY…RMNNVLSQIN (78 aa)) are c.

The protein belongs to the heat shock protein 90 family. In terms of assembly, homodimer.

Its subcellular location is the cytoplasm. In terms of biological role, molecular chaperone. Has ATPase activity. The polypeptide is Chaperone protein HtpG (Ehrlichia ruminantium (strain Welgevonden)).